Consider the following 180-residue polypeptide: Large ribosomal subunit protein uL6 (180 aa).

The protein belongs to the universal ribosomal protein uL6 family. In terms of assembly, part of the 50S ribosomal subunit.

Its function is as follows. This protein binds to the 23S rRNA, and is important in its secondary structure. It is located near the subunit interface in the base of the L7/L12 stalk, and near the tRNA binding site of the peptidyltransferase center. The polypeptide is Large ribosomal subunit protein uL6 (Christiangramia forsetii (strain DSM 17595 / CGMCC 1.15422 / KT0803) (Gramella forsetii)).